The following is a 218-amino-acid chain: MPMTLGYWNTRGLTHSIRLLLEYTDSSYEEKRYVMGDAPNFDRSQWLSEKFNLGLDFPNLPYLIDGSHKVTQSNAILRYLGRKHNLCGETEEERIRVDTLENQVMDTRIQLMIVCCSPDFEKQKPEFLKAIPEKMKLYSEFLGKRPWFAGDKVTYVDFLAYDILDQYRMFEPKCLDAFPNLRDFLARFEGLKKISAYMKSSRFLPRPVFTKIAQWGTD.

Positions 2 to 88 (PMTLGYWNTR…YLGRKHNLCG (87 aa)) constitute a GST N-terminal domain. Glutathione contacts are provided by residues 7–8 (YW), 46–50 (WLSEK), and 59–60 (NL). A Glycyl lysine isopeptide (Lys-Gly) (interchain with G-Cter in SUMO2) cross-link involves residue lysine 50. Lysine 69 participates in a covalent cross-link: Glycyl lysine isopeptide (Lys-Gly) (interchain with G-Cter in SUMO2). 72-73 (QS) serves as a coordination point for glutathione. In terms of domain architecture, GST C-terminal spans 90–208 (TEEERIRVDT…KSSRFLPRPV (119 aa)).

This sequence belongs to the GST superfamily. Mu family. In terms of assembly, homodimer.

The protein localises to the cytoplasm. The enzyme catalyses RX + glutathione = an S-substituted glutathione + a halide anion + H(+). Functionally, conjugation of reduced glutathione to a wide number of exogenous and endogenous hydrophobic electrophiles. This Mus musculus (Mouse) protein is Glutathione S-transferase Mu 3 (Gstm3).